We begin with the raw amino-acid sequence, 843 residues long: Protein translocase subunit SecA 1 (843 aa).

ATP is bound by residues glutamine 91, 109 to 113 (GEGKT), and aspartate 498. Basic and acidic residues predominate over residues 799–813 (EAKHVSAEDGKEKVK). The interval 799 to 826 (EAKHVSAEDGKEKVKPKPIVKGDQVGRN) is disordered. Residues cysteine 829, cysteine 831, cysteine 840, and histidine 841 each contribute to the Zn(2+) site.

It belongs to the SecA family. Monomer and homodimer. Part of the essential Sec protein translocation apparatus which comprises SecA, SecYEG and auxiliary proteins SecDF. Other proteins may also be involved. Requires Zn(2+) as cofactor.

The protein resides in the cell membrane. The protein localises to the cytoplasm. It catalyses the reaction ATP + H2O + cellular proteinSide 1 = ADP + phosphate + cellular proteinSide 2.. Part of the Sec protein translocase complex. Interacts with the SecYEG preprotein conducting channel. Has a central role in coupling the hydrolysis of ATP to the transfer of proteins into and across the cell membrane, serving as an ATP-driven molecular motor driving the stepwise translocation of polypeptide chains across the membrane. The polypeptide is Protein translocase subunit SecA 1 (Staphylococcus aureus (strain MRSA252)).